A 237-amino-acid chain; its full sequence is Probable S-methyl-5'-thioinosine phosphorylase (237 aa).

Residues Thr12 and Arg54–His55 contribute to the phosphate site. A substrate-binding site is contributed by Met187. Residue Thr188 coordinates phosphate. Asn211–Ala213 serves as a coordination point for substrate.

It belongs to the PNP/MTAP phosphorylase family. MTAP subfamily. In terms of assembly, homotrimer.

It carries out the reaction S-methyl-5'-thioinosine + phosphate = 5-(methylsulfanyl)-alpha-D-ribose 1-phosphate + hypoxanthine. The protein operates within purine metabolism; purine nucleoside salvage. In terms of biological role, catalyzes the reversible phosphorylation of S-methyl-5'-thioinosine (MTI) to hypoxanthine and 5-methylthioribose-1-phosphate. Involved in the breakdown of S-methyl-5'-thioadenosine (MTA), a major by-product of polyamine biosynthesis. Catabolism of (MTA) occurs via deamination to MTI and phosphorolysis to hypoxanthine. The protein is Probable S-methyl-5'-thioinosine phosphorylase of Xylella fastidiosa (strain 9a5c).